A 344-amino-acid polypeptide reads, in one-letter code: 5-formaminoimidazole-4-carboxamide-1-(beta)-D-ribofuranosyl 5'-monophosphate synthetase (344 aa).

5-amino-1-(5-phospho-beta-D-ribosyl)imidazole-4-carboxamide contacts are provided by histidine 31 and serine 96. The ATP-grasp domain maps to 130 to 324 (MELLQRAGVP…YFDRPMDMGE (195 aa)). ATP is bound by residues 153 to 198 (PVIV…VPAY) and glutamate 220. Residue asparagine 240 coordinates 5-amino-1-(5-phospho-beta-D-ribosyl)imidazole-4-carboxamide. Mg(2+) contacts are provided by glutamate 279 and glutamate 292.

Belongs to the phosphohexose mutase family. It depends on Mg(2+) as a cofactor. The cofactor is Mn(2+).

It carries out the reaction 5-amino-1-(5-phospho-beta-D-ribosyl)imidazole-4-carboxamide + formate + ATP = 5-formamido-1-(5-phospho-D-ribosyl)imidazole-4-carboxamide + ADP + phosphate. Its pathway is purine metabolism; IMP biosynthesis via de novo pathway; 5-formamido-1-(5-phospho-D-ribosyl)imidazole-4-carboxamide from 5-amino-1-(5-phospho-D-ribosyl)imidazole-4-carboxamide (formate route): step 1/1. Functionally, catalyzes the ATP- and formate-dependent formylation of 5-aminoimidazole-4-carboxamide-1-beta-d-ribofuranosyl 5'-monophosphate (AICAR) to 5-formaminoimidazole-4-carboxamide-1-beta-d-ribofuranosyl 5'-monophosphate (FAICAR) in the absence of folates. The protein is 5-formaminoimidazole-4-carboxamide-1-(beta)-D-ribofuranosyl 5'-monophosphate synthetase of Pyrobaculum neutrophilum (strain DSM 2338 / JCM 9278 / NBRC 100436 / V24Sta) (Thermoproteus neutrophilus).